Consider the following 1339-residue polypeptide: Retrotransposon Gag-like protein 9 (1339 aa).

Composition is skewed to polar residues over residues 533–545 (TVPT…TQKT), 679–693 (SGTK…TTSG), and 700–711 (TRLSGPGATSTP). Disordered regions lie at residues 533–555 (TVPT…PMST), 679–711 (SGTK…TSTP), 845–864 (GVMS…SRPQ), 880–901 (PATA…LSTL), 982–1010 (ATSL…GAGS), and 1078–1116 (ATDS…PPKE). A compositionally biased stretch (low complexity) spans 891–901 (RSPASSTLSTL). The span at 1078–1106 (ATDSGEASTSHTRFTAPGSKSTPHMTSTA) shows a compositional bias: polar residues.

The polypeptide is Retrotransposon Gag-like protein 9 (Mus musculus (Mouse)).